The sequence spans 126 residues: Thioredoxin H-type 1 (126 aa).

The 119-residue stretch at 2-120 (AANDATSSEE…LQQTIVKHAA (119 aa)) folds into the Thioredoxin domain. Residues C46 and C49 each act as nucleophile in the active site. An intrachain disulfide couples C46 to C49.

It belongs to the thioredoxin family. Plant H-type subfamily.

The protein resides in the cytoplasm. Participates in various redox reactions through the reversible oxidation of the active center dithiol to a disulfide. The H form is known to activate a number of cytosolic enzymes. The polypeptide is Thioredoxin H-type 1 (Nicotiana tabacum (Common tobacco)).